The following is a 376-amino-acid chain: Dihydroorotate dehydrogenase (quinone) (376 aa).

Residues alanine 74–lysine 78 and threonine 98 each bind FMN. Lysine 78 contacts substrate. Position 123 to 127 (asparagine 123 to phenylalanine 127) interacts with substrate. FMN-binding residues include asparagine 155 and asparagine 188. Asparagine 188 lines the substrate pocket. Serine 191 acts as the Nucleophile in catalysis. Asparagine 193 is a substrate binding site. FMN contacts are provided by lysine 226 and threonine 254. Asparagine 255–threonine 256 serves as a coordination point for substrate. FMN-binding positions include glycine 284, glycine 313, and tyrosine 334–threonine 335.

The protein belongs to the dihydroorotate dehydrogenase family. Type 2 subfamily. Monomer. FMN is required as a cofactor.

Its subcellular location is the cell membrane. It carries out the reaction (S)-dihydroorotate + a quinone = orotate + a quinol. It functions in the pathway pyrimidine metabolism; UMP biosynthesis via de novo pathway; orotate from (S)-dihydroorotate (quinone route): step 1/1. Its function is as follows. Catalyzes the conversion of dihydroorotate to orotate with quinone as electron acceptor. This chain is Dihydroorotate dehydrogenase (quinone), found in Nostoc punctiforme (strain ATCC 29133 / PCC 73102).